Consider the following 709-residue polypeptide: Phosphate acetyltransferase (709 aa).

Residues 389 to 709 (EFCYRLKILS…TIALTSIQSL (321 aa)) form a phosphate acetyltransferase region.

In the N-terminal section; belongs to the CobB/CobQ family. It in the C-terminal section; belongs to the phosphate acetyltransferase and butyryltransferase family. Homohexamer.

It localises to the cytoplasm. It carries out the reaction acetyl-CoA + phosphate = acetyl phosphate + CoA. The protein operates within metabolic intermediate biosynthesis; acetyl-CoA biosynthesis; acetyl-CoA from acetate: step 2/2. In terms of biological role, involved in acetate metabolism. The chain is Phosphate acetyltransferase (pta) from Buchnera aphidicola subsp. Schizaphis graminum (strain Sg).